A 97-amino-acid polypeptide reads, in one-letter code: MEPQEVAAAAGVHPIELCVYSILSNNLDGIYQSVNDLRESQALLVVRLKQIRNLLKEEQEYYNEEEGLGVERERLEELELRVEKLTQKYKKLLADCV.

A coiled-coil region spans residues V45 to V97.

It belongs to the SNAPIN family. In terms of assembly, component of the biogenesis of lysosome-related organelles complex-1 (BLOC-1).

Its subcellular location is the endosome. Component of the biogenesis of lysosome-related organelles complex-1 (BLOC-1), a complex involved in endosomal cargo sorting. The sequence is that of Biogenesis of lysosome-related organelles complex 1 subunit SNN1 (SNN1) from Lachancea thermotolerans (strain ATCC 56472 / CBS 6340 / NRRL Y-8284) (Yeast).